The chain runs to 303 residues: Oxygen-dependent coproporphyrinogen-III oxidase (303 aa).

Serine 93 serves as a coordination point for substrate. A divalent metal cation is bound by residues histidine 97 and histidine 107. Histidine 107 serves as the catalytic Proton donor. 109-111 provides a ligand contact to substrate; the sequence is NVR. Positions 149 and 179 each coordinate a divalent metal cation. The segment at 244-279 is important for dimerization; that stretch reads YVEFNLVFDRGTLFGLQSGGRTESILLSMPPMAQWR. 262–264 contacts substrate; sequence GGR.

The protein belongs to the aerobic coproporphyrinogen-III oxidase family. As to quaternary structure, homodimer. A divalent metal cation is required as a cofactor.

The protein localises to the cytoplasm. The enzyme catalyses coproporphyrinogen III + O2 + 2 H(+) = protoporphyrinogen IX + 2 CO2 + 2 H2O. It participates in porphyrin-containing compound metabolism; protoporphyrin-IX biosynthesis; protoporphyrinogen-IX from coproporphyrinogen-III (O2 route): step 1/1. In terms of biological role, involved in the heme biosynthesis. Catalyzes the aerobic oxidative decarboxylation of propionate groups of rings A and B of coproporphyrinogen-III to yield the vinyl groups in protoporphyrinogen-IX. This chain is Oxygen-dependent coproporphyrinogen-III oxidase, found in Bordetella petrii (strain ATCC BAA-461 / DSM 12804 / CCUG 43448).